The primary structure comprises 372 residues: tRNA-specific 2-thiouridylase MnmA (372 aa).

Residues 16–23 (GMSGGVDS) and Met-42 each bind ATP. The interaction with target base in tRNA stretch occupies residues 102–104 (NPD). Cys-107 serves as the catalytic Nucleophile. A disulfide bond links Cys-107 and Cys-205. ATP is bound at residue Gly-132. Residues 155 to 157 (KDQ) are interaction with tRNA. The active-site Cysteine persulfide intermediate is the Cys-205. The interval 317-318 (RY) is interaction with tRNA.

This sequence belongs to the MnmA/TRMU family.

It is found in the cytoplasm. The catalysed reaction is S-sulfanyl-L-cysteinyl-[protein] + uridine(34) in tRNA + AH2 + ATP = 2-thiouridine(34) in tRNA + L-cysteinyl-[protein] + A + AMP + diphosphate + H(+). Its function is as follows. Catalyzes the 2-thiolation of uridine at the wobble position (U34) of tRNA, leading to the formation of s(2)U34. The protein is tRNA-specific 2-thiouridylase MnmA of Shewanella sp. (strain MR-7).